We begin with the raw amino-acid sequence, 444 residues long: Protein giant-lens (444 aa).

An N-terminal signal peptide occupies residues 1 to 24 (MPTTLMLLPCMLLLLLTAAAVAVG). Two-fingered domain 1 part repeat units follow at residues 123–165 (RDVR…CRCP) and 285–307 (CPSS…YKMC). 8 disulfides stabilise this stretch: cysteine 141-cysteine 162, cysteine 147-cysteine 285, cysteine 164-cysteine 307, cysteine 316-cysteine 341, cysteine 343-cysteine 370, cysteine 378-cysteine 405, cysteine 384-cysteine 413, and cysteine 407-cysteine 440. 2 Two-fingered domain repeats span residues 316 to 370 (CTHF…LFAC) and 378 to 444 (CQRK…MAND). Residue asparagine 333 is glycosylated (N-linked (GlcNAc...) asparagine).

Interacts with spi. During embryogenesis, expression is in a segmental pattern in the ectoderm and in the nervous system. In the eye imaginal disks, expression in photoreceptor cells begins a few rows posterior to the morphogenetic furrow. Also expressed in the wing disk. In the adult, expression is seen in the retina and lamina.

It is found in the secreted. Regulates cell determination; development of ommatidia and optic lobe. Is a signaling molecule involved in the process of axon pathfinding in the eye. Part of the Ras pathway regulating programmed cell death in pupal eyes; activated by lozenge (lz). Antagonist for the Egfr receptor (gurken). Inhibits Egfr signaling without interacting directly with the receptor, but instead by sequestering the Egfr-activating ligand spitz (spi). The polypeptide is Protein giant-lens (aos) (Drosophila melanogaster (Fruit fly)).